A 232-amino-acid chain; its full sequence is Phosphatidylserine decarboxylase proenzyme (232 aa).

The Schiff-base intermediate with substrate; via pyruvic acid role is filled by S190. S190 carries the post-translational modification Pyruvic acid (Ser); by autocatalysis.

It belongs to the phosphatidylserine decarboxylase family. PSD-A subfamily. Heterodimer of a large membrane-associated beta subunit and a small pyruvoyl-containing alpha subunit. It depends on pyruvate as a cofactor. Post-translationally, is synthesized initially as an inactive proenzyme. Formation of the active enzyme involves a self-maturation process in which the active site pyruvoyl group is generated from an internal serine residue via an autocatalytic post-translational modification. Two non-identical subunits are generated from the proenzyme in this reaction, and the pyruvate is formed at the N-terminus of the alpha chain, which is derived from the carboxyl end of the proenzyme. The post-translation cleavage follows an unusual pathway, termed non-hydrolytic serinolysis, in which the side chain hydroxyl group of the serine supplies its oxygen atom to form the C-terminus of the beta chain, while the remainder of the serine residue undergoes an oxidative deamination to produce ammonia and the pyruvoyl prosthetic group on the alpha chain.

It localises to the cell membrane. The enzyme catalyses a 1,2-diacyl-sn-glycero-3-phospho-L-serine + H(+) = a 1,2-diacyl-sn-glycero-3-phosphoethanolamine + CO2. Its pathway is phospholipid metabolism; phosphatidylethanolamine biosynthesis; phosphatidylethanolamine from CDP-diacylglycerol: step 2/2. In terms of biological role, catalyzes the formation of phosphatidylethanolamine (PtdEtn) from phosphatidylserine (PtdSer). In Bartonella henselae (strain ATCC 49882 / DSM 28221 / CCUG 30454 / Houston 1) (Rochalimaea henselae), this protein is Phosphatidylserine decarboxylase proenzyme.